The sequence spans 842 residues: Cation/H(+) antiporter 20 (842 aa).

A run of 12 helical transmembrane segments spans residues 26–46 (FPLL…LAVL), 55–75 (VIAE…RNMA), 86–106 (MPIL…LVGL), 122–142 (GIAV…AFVI), 155–175 (YAEF…PVLA), 193–213 (MAAA…AVAL), 228–248 (LVSL…LVVI), 283–303 (FATD…GLTI), 320–340 (FVSG…TDVA), 353–373 (LVVV…AVMV), 380–400 (ALTL…VLNI), and 413–433 (AILV…VMAI). Basic and acidic residues predominate over residues 585–595 (DHGHSHHHQDG). The segment at 585–605 (DHGHSHHHQDGGGDGNVPENV) is disordered.

This sequence belongs to the monovalent cation:proton antiporter 2 (CPA2) transporter (TC 2.A.37) family. CHX (TC 2.A.37.4) subfamily. In terms of tissue distribution, expressed in leaves and stems. Preferentially expressed in guards cells.

Its subcellular location is the endomembrane system. Its function is as follows. Operates as a K(+)/H(+) antiporter that maintains K(+) homeostasis in guard cells and could regulate pH. Plays a critical role in osmoregulation through the control of stomates opening. The polypeptide is Cation/H(+) antiporter 20 (CHX20) (Arabidopsis thaliana (Mouse-ear cress)).